A 362-amino-acid chain; its full sequence is Heat-inducible transcription repressor HrcA (362 aa).

Belongs to the HrcA family.

Functionally, negative regulator of class I heat shock genes (grpE-dnaK-dnaJ and groELS operons). Prevents heat-shock induction of these operons. This is Heat-inducible transcription repressor HrcA from Rhizobium leguminosarum bv. trifolii (strain WSM2304).